We begin with the raw amino-acid sequence, 439 residues long: Putative porin QuiX (439 aa).

Residues 1-22 (MRHFFKLGLVSAAVLGSQMTLA) form the signal peptide.

The protein belongs to the OprB family.

The protein localises to the cell outer membrane. In terms of biological role, could be involved in the transport of quinate or shikimate. The polypeptide is Putative porin QuiX (quiX) (Acinetobacter baylyi (strain ATCC 33305 / BD413 / ADP1)).